The chain runs to 111 residues: Prophage-derived-like uncharacterized protein YozM (111 aa).

Residues Met-1–Glu-24 form the signal peptide.

The polypeptide is Prophage-derived-like uncharacterized protein YozM (yozM) (Bacillus subtilis (strain 168)).